The sequence spans 305 residues: Glycerol-3-phosphate dehydrogenase [NAD(P)+] (305 aa).

NADPH contacts are provided by F10, R29, and K87. Sn-glycerol 3-phosphate-binding residues include K87, G115, and S117. A119 provides a ligand contact to NADPH. K170, D223, S233, R234, and N235 together coordinate sn-glycerol 3-phosphate. Catalysis depends on K170, which acts as the Proton acceptor. Position 234 (R234) interacts with NADPH. E255 lines the NADPH pocket.

The protein belongs to the NAD-dependent glycerol-3-phosphate dehydrogenase family.

Its subcellular location is the cytoplasm. It catalyses the reaction sn-glycerol 3-phosphate + NAD(+) = dihydroxyacetone phosphate + NADH + H(+). The enzyme catalyses sn-glycerol 3-phosphate + NADP(+) = dihydroxyacetone phosphate + NADPH + H(+). Its pathway is membrane lipid metabolism; glycerophospholipid metabolism. In terms of biological role, catalyzes the reduction of the glycolytic intermediate dihydroxyacetone phosphate (DHAP) to sn-glycerol 3-phosphate (G3P), the key precursor for phospholipid synthesis. This is Glycerol-3-phosphate dehydrogenase [NAD(P)+] from Cereibacter sphaeroides (strain ATCC 17023 / DSM 158 / JCM 6121 / CCUG 31486 / LMG 2827 / NBRC 12203 / NCIMB 8253 / ATH 2.4.1.) (Rhodobacter sphaeroides).